A 162-amino-acid polypeptide reads, in one-letter code: Cytochrome c-type biogenesis protein CcmE (162 aa).

Residues Met1 to Arg8 lie on the Cytoplasmic side of the membrane. The helical; Signal-anchor for type II membrane protein transmembrane segment at Leu9–Ala29 threads the bilayer. Topologically, residues Leu30–Arg162 are periplasmic. Heme-binding residues include His131 and Tyr135.

This sequence belongs to the CcmE/CycJ family.

The protein resides in the cell inner membrane. Heme chaperone required for the biogenesis of c-type cytochromes. Transiently binds heme delivered by CcmC and transfers the heme to apo-cytochromes in a process facilitated by CcmF and CcmH. The polypeptide is Cytochrome c-type biogenesis protein CcmE (Shewanella amazonensis (strain ATCC BAA-1098 / SB2B)).